The sequence spans 382 residues: 8-amino-7-oxononanoate synthase (382 aa).

Residues Arg-22 and Arg-29 each coordinate substrate. 109–110 (GF) is a binding site for pyridoxal 5'-phosphate. Position 134 (His-134) interacts with substrate. Residues Ser-182, 207–210 (DDAH), and 233–236 (TLSK) contribute to the pyridoxal 5'-phosphate site. Lys-236 is subject to N6-(pyridoxal phosphate)lysine. Position 345 (Thr-345) interacts with substrate.

The protein belongs to the class-II pyridoxal-phosphate-dependent aminotransferase family. BioF subfamily. Homodimer. The cofactor is pyridoxal 5'-phosphate.

It catalyses the reaction 6-carboxyhexanoyl-[ACP] + L-alanine + H(+) = (8S)-8-amino-7-oxononanoate + holo-[ACP] + CO2. It functions in the pathway cofactor biosynthesis; biotin biosynthesis. Functionally, catalyzes the decarboxylative condensation of pimeloyl-[acyl-carrier protein] and L-alanine to produce 8-amino-7-oxononanoate (AON), [acyl-carrier protein], and carbon dioxide. The polypeptide is 8-amino-7-oxononanoate synthase (Granulibacter bethesdensis (strain ATCC BAA-1260 / CGDNIH1)).